A 375-amino-acid polypeptide reads, in one-letter code: Formate dehydrogenase (375 aa).

Residues Ile-94 and Asn-120 each coordinate substrate. NAD(+) contacts are provided by residues 175–176 (RI), Asp-196, 231–235 (PLHEK), Thr-257, Asp-283, 312–315 (HMSG), and Ser-358.

This sequence belongs to the D-isomer specific 2-hydroxyacid dehydrogenase family. FDH subfamily. Homodimer.

It localises to the cytoplasm. It carries out the reaction formate + NAD(+) = CO2 + NADH. In terms of biological role, catalyzes the NAD(+)-dependent oxidation of formate to carbon dioxide. Formate oxidation is the final step in the methanol oxidation pathway in methylotrophic microorganisms. Has a role in the detoxification of exogenous formate in non-methylotrophic organisms. The protein is Formate dehydrogenase of Neurospora crassa (strain ATCC 24698 / 74-OR23-1A / CBS 708.71 / DSM 1257 / FGSC 987).